The chain runs to 306 residues: Ribonuclease Z (306 aa).

Residues H61, H63, D65, H66, H137, D207, and H263 each coordinate Zn(2+). D65 functions as the Proton acceptor in the catalytic mechanism.

Belongs to the RNase Z family. Homodimer. Requires Zn(2+) as cofactor.

It carries out the reaction Endonucleolytic cleavage of RNA, removing extra 3' nucleotides from tRNA precursor, generating 3' termini of tRNAs. A 3'-hydroxy group is left at the tRNA terminus and a 5'-phosphoryl group is left at the trailer molecule.. Functionally, zinc phosphodiesterase, which displays some tRNA 3'-processing endonuclease activity. Probably involved in tRNA maturation, by removing a 3'-trailer from precursor tRNA. This chain is Ribonuclease Z, found in Thermococcus sibiricus (strain DSM 12597 / MM 739).